The chain runs to 605 residues: F-box/WD repeat-containing protein 1A (605 aa).

A homodimerization domain D region spans residues 128 to 177 (ASYEKEKELCVKYFEQWSESDQVEFVEHLISQMCHYQHGHINSYLKPMLQ). In terms of domain architecture, F-box spans 182–228 (TALPARGLDHIAENILSYLDAKSLCAAELVCKEWYRVTSDGMLWKKL). The required for down-regulation of SNAI1 stretch occupies residues 190 to 228 (DHIAENILSYLDAKSLCAAELVCKEWYRVTSDGMLWKKL). WD repeat units lie at residues 301-338 (ETSK…CKRI), 341-378 (GHTG…MLNT), 381-418 (HHCE…DITL), 424-461 (GHRA…FVRT), 464-503 (GHKR…RVLE), 505-541 (HEEL…DPRA), and 553-590 (EHSG…AAHA).

Homodimer. Self-associates. Component of the SCF(BTRC) complex, composed of SKP1, CUL1 and BTRC. Direct interaction with SKP1 with SKP1 occurs via the F-box domain. Interacts with phosphorylated ubiquitination substrates SMAD3 and SMAD4. Interacts with phosphorylated ubiquitination substrates CTNNB1, NFKBIA, NFKBIB, NFKBIE, NFKB1/nuclear factor NF-kappa-B p105 subunit, ATF4, CDC25A, DLG1, FBXO5 and SNAI1; the interaction requires the phosphorylation of the 2 serine residues in the substrate destruction motif D-S-G-X(2,3,4)-S. Binds UBQLN1. Interacts with CDC34 and UBE2R2. Interacts with FBXW11. Interacts with CUL4A and DDB1. Part of a SCF(BTRC)-like complex lacking CUL1, which is associated with phosphorylated NKBIA and RELA; RELA interacts directly with NFKBIA. Interacts with the phosphorylated form of GLI3. Interacts with CLU. Interacts with PER1 (phosphorylated), PER2 (phosphorylated) and PER3. Interacts with phosphorylated ubiquitination substrate CEP68. Interacts with ZC3H12A; this interaction occurs when ZC3H12A is phosphorylated in a IKBKB/IKKB-dependent manner. Interacts with HSF1; this interaction occurs during mitosis and induces HSF1 ubiquitin-dependent degradation, a process inhibited by CDC20. Interacts with NFE2L1. Interacts with INAVA. Interacts with IL10RA; this interaction leads to IL10RA ubiquitination and subsequent degradation. Interacts with REST. Interacts with KLF4; this interaction leads to KLF4 ubiquitination and subsequent degradation. Interacts with UBR2, as part of a SCF(BTRC) complex; the interaction mediates 'Lys-48'-linked ubiquitination of UBR2 and is regulated by DUSP22 in the T-cell receptor signaling pathway. Post-translationally, ubiquitinated via 'Lys-11'-linked polyubiquitin by some cullin-5-RING E3 ubiquitin-protein ligase complex (ECS complex), leading to its degradation. Deubiquitinated by OTUD5, promoting its stability. As to expression, expressed in heart, brain, liver, skeletal muscle and, most strongly, in testis.

The protein localises to the cytoplasm. The protein resides in the nucleus. It participates in protein modification; protein ubiquitination. In terms of biological role, substrate recognition component of a SCF (SKP1-CUL1-F-box protein) E3 ubiquitin-protein ligase complex which mediates the ubiquitination and subsequent proteasomal degradation of target proteins. Recognizes and binds to phosphorylated target proteins. SCF(BTRC) mediates the ubiquitination of phosphorylated NFKB, ATF4, CDC25A, DLG1, FBXO5, PER1, SMAD3, SMAD4, SNAI1 and probably NFKB2. SCF(BTRC) mediates the ubiquitination of CTNNB1 and participates in Wnt signaling. SCF(BTRC) mediates the ubiquitination of NFKBIA, NFKBIB and NFKBIE; the degradation frees the associated NFKB1 to translocate into the nucleus and to activate transcription. Ubiquitination of NFKBIA occurs at 'Lys-21' and 'Lys-22'. The SCF(FBXW11) complex also regulates NF-kappa-B by mediating ubiquitination of phosphorylated NFKB1: specifically ubiquitinates the p105 form of NFKB1, leading to its degradation. SCF(BTRC) mediates the ubiquitination of CEP68; this is required for centriole separation during mitosis. SCF(BTRC) mediates the ubiquitination and subsequent degradation of nuclear NFE2L1. Has an essential role in the control of the clock-dependent transcription via degradation of phosphorylated PER1 and PER2. May be involved in ubiquitination and subsequent proteasomal degradation through a DBB1-CUL4 E3 ubiquitin-protein ligase. Required for activation of NFKB-mediated transcription by IL1B, MAP3K14, MAP3K1, IKBKB and TNF. Required for proteolytic processing of GLI3. Mediates ubiquitination of REST, thereby leading to its proteasomal degradation. SCF(BTRC) mediates the ubiquitination and subsequent proteasomal degradation of KLF4; thereby negatively regulating cell pluripotency maintenance and embryogenesis. SCF(BTRC) acts as a regulator of mTORC1 signaling pathway by catalyzing ubiquitination and subsequent proteasomal degradation of phosphorylated DEPTOR, TFE3 and MITF. SCF(BTRC) directs 'Lys-48'-linked ubiquitination of UBR2 in the T-cell receptor signaling pathway. This is F-box/WD repeat-containing protein 1A from Mus musculus (Mouse).